A 160-amino-acid polypeptide reads, in one-letter code: ATP synthase subunit b (160 aa).

A helical transmembrane segment spans residues valine 13–isoleucine 33.

Belongs to the ATPase B chain family. F-type ATPases have 2 components, F(1) - the catalytic core - and F(0) - the membrane proton channel. F(1) has five subunits: alpha(3), beta(3), gamma(1), delta(1), epsilon(1). F(0) has four main subunits: a(1), b(1), b'(1) and c(10-14). The alpha and beta chains form an alternating ring which encloses part of the gamma chain. F(1) is attached to F(0) by a central stalk formed by the gamma and epsilon chains, while a peripheral stalk is formed by the delta, b and b' chains.

It is found in the cellular thylakoid membrane. F(1)F(0) ATP synthase produces ATP from ADP in the presence of a proton or sodium gradient. F-type ATPases consist of two structural domains, F(1) containing the extramembraneous catalytic core and F(0) containing the membrane proton channel, linked together by a central stalk and a peripheral stalk. During catalysis, ATP synthesis in the catalytic domain of F(1) is coupled via a rotary mechanism of the central stalk subunits to proton translocation. Functionally, component of the F(0) channel, it forms part of the peripheral stalk, linking F(1) to F(0). This is ATP synthase subunit b from Parasynechococcus marenigrum (strain WH8102).